Here is a 33-residue protein sequence, read N- to C-terminus: Phospholipase A2 homolog BmarPLA2 (33 aa).

The protein belongs to the phospholipase A2 family. Group II subfamily. K49 sub-subfamily. In terms of assembly, homodimer; non-covalently linked. In terms of tissue distribution, expressed by the venom gland.

The protein localises to the secreted. In terms of biological role, snake phospholipase A2 homolog that lacks enzymatic activity. May display myotoxin activity. In isolated heart decreases cardiac frequency. Also decreases mean arterial pressure. Does not show antimicrobial activity. Does not change renal parameters (such as perfusion pressure, renal vascular resistance, urinary flow, glomerular filtration rate and sodium tubular transport). This Bothrops marajoensis (Marajo lancehead) protein is Phospholipase A2 homolog BmarPLA2.